Consider the following 500-residue polypeptide: L-arabinose isomerase (500 aa).

Mn(2+)-binding residues include Glu306, Glu333, His350, and His450.

Belongs to the arabinose isomerase family. In terms of assembly, homohexamer. Requires Mn(2+) as cofactor.

It carries out the reaction beta-L-arabinopyranose = L-ribulose. It functions in the pathway carbohydrate degradation; L-arabinose degradation via L-ribulose; D-xylulose 5-phosphate from L-arabinose (bacterial route): step 1/3. Catalyzes the conversion of L-arabinose to L-ribulose. This is L-arabinose isomerase from Shigella flexneri serotype 5b (strain 8401).